Consider the following 244-residue polypeptide: Small ribosomal subunit protein eS4 (244 aa).

Residues 43-106 (LPLLLVVRDI…DENYLVLFDE (64 aa)) form the S4 RNA-binding domain.

This sequence belongs to the eukaryotic ribosomal protein eS4 family.

This chain is Small ribosomal subunit protein eS4, found in Methanococcus maripaludis (strain C6 / ATCC BAA-1332).